Here is a 382-residue protein sequence, read N- to C-terminus: Galactokinase (382 aa).

Residue 34 to 37 (EHTD) participates in substrate binding. 124–130 (GAGLSSS) serves as a coordination point for ATP. Residues Ser130 and Glu162 each contribute to the Mg(2+) site. Asp174 (proton acceptor) is an active-site residue. Tyr223 lines the substrate pocket.

Belongs to the GHMP kinase family. GalK subfamily.

It localises to the cytoplasm. It catalyses the reaction alpha-D-galactose + ATP = alpha-D-galactose 1-phosphate + ADP + H(+). It participates in carbohydrate metabolism; galactose metabolism. In terms of biological role, catalyzes the transfer of the gamma-phosphate of ATP to D-galactose to form alpha-D-galactose-1-phosphate (Gal-1-P). The polypeptide is Galactokinase (Enterobacter sp. (strain 638)).